The following is a 273-amino-acid chain: Shikimate dehydrogenase (NADP(+)) (273 aa).

Residues Ser-18–Ser-20 and Thr-65 each bind shikimate. Catalysis depends on Lys-69, which acts as the Proton acceptor. Glu-81 provides a ligand contact to NADP(+). Shikimate contacts are provided by Asn-90 and Asp-105. NADP(+) contacts are provided by residues Gly-130 to Ala-134, Asn-154 to Lys-159, and Met-217. Residue Tyr-219 coordinates shikimate. An NADP(+)-binding site is contributed by Gly-240.

The protein belongs to the shikimate dehydrogenase family. As to quaternary structure, homodimer.

The enzyme catalyses shikimate + NADP(+) = 3-dehydroshikimate + NADPH + H(+). The protein operates within metabolic intermediate biosynthesis; chorismate biosynthesis; chorismate from D-erythrose 4-phosphate and phosphoenolpyruvate: step 4/7. Involved in the biosynthesis of the chorismate, which leads to the biosynthesis of aromatic amino acids. Catalyzes the reversible NADPH linked reduction of 3-dehydroshikimate (DHSA) to yield shikimate (SA). In Herminiimonas arsenicoxydans, this protein is Shikimate dehydrogenase (NADP(+)).